The following is a 106-amino-acid chain: ATP-dependent Clp protease adapter protein ClpS (106 aa).

Residues 1–20 form a disordered region; it reads MKVDMSTSVKDDAQLEASRV.

The protein belongs to the ClpS family. As to quaternary structure, binds to the N-terminal domain of the chaperone ClpA.

Involved in the modulation of the specificity of the ClpAP-mediated ATP-dependent protein degradation. The sequence is that of ATP-dependent Clp protease adapter protein ClpS from Chromobacterium violaceum (strain ATCC 12472 / DSM 30191 / JCM 1249 / CCUG 213 / NBRC 12614 / NCIMB 9131 / NCTC 9757 / MK).